Reading from the N-terminus, the 366-residue chain is MDPNPKPAISGKDNGVFEHRSFARIGFLGNPSDVYFGRTISFTIGNFWAWAKLEPSDHLLIKPHPFHDLVQFDSLDNLVYRLENDGYYGGVRLLMAICKVFRNYCKENGIQLHDKNFTLSYDTNIPRQTGLSGSSAIVSAALSCLLDFYNVRQSIRIEVRPNLILNAEKELGIVAGLQDRVAQVYGGGLVHMDFSKEHMDKVGYGIYTIMDINLLPPLHLIYAENPSDSGKVHSTVRRRWLDGDEFIISSMAEIAKLAEEGRTALLKKDYSNLKELMNRNFDLRRSMFGDECLGAMNIEMVEVARKIGAAAKFTGSGGAVVVFCPEGPSQVKLLEEECRKSGFIVEPVKLVPTRLSSSDIKTLSKT.

Residue 126-136 participates in ATP binding; the sequence is PRQTGLSGSSA. The active-site Proton acceptor is D179.

The protein belongs to the GHMP kinase family. It depends on Mg(2+) as a cofactor. The cofactor is Mn(2+). Requires Co(2+) as cofactor.

It catalyses the reaction D-glucuronate + ATP = 1-phospho-alpha-D-glucuronate + ADP + H(+). Functionally, sugar-1-kinase with a strict substrate specificity for D-glucuronic acid and ATP. Involved in the biosynthesis of UDP-glucuronic acid (UDP-GlcA), providing nucleotide sugars for cell-wall polymers. May be also involved in a salvage pathway for glucuronic acid. The protein is Probable glucuronokinase 2 (GLCAK2) of Arabidopsis thaliana (Mouse-ear cress).